Reading from the N-terminus, the 443-residue chain is MSNMTPKNIVKELDSHIIGQHDAKKAVAIALRNRWRRMKLDDSLRHEVTPKNILMIGPTGVGKTEIARRLAKLAKAPFIKVEATKFTEVGYVGKEVDSIIRDLTDASVKMIRLQSIEKNRFRAEELAEERVLDVLIPSVKNDWGNSENKKEPSKTRQNFRKKLKTKELDDKEIEINLASTPIGVEIMAPPGMEEMTSQLQSMFKNLAGQKQKPRKIKIKEAMRLLIEEESAKLINLEEIKEKAVEAVEQNGIVFIDEIDKICKRGEISGPDVSREGVQRDLLPLVEGCTVSTKHGMVKTDHILFIASGAFQVANPSDLIPELQGRLPIRVELSALTIEDFEKILTEPSASLTKQYSALMATEGVIISFTQEGIKKIAEAACQVNDSTENIGARRLHTILERLMEEVSYNASEWNGKKINIDADYVSNHLDKLVSDEDLSRFIL.

ATP-binding positions include isoleucine 18, 60 to 65, aspartate 256, glutamate 321, and arginine 393; that span reads GVGKTE.

Belongs to the ClpX chaperone family. HslU subfamily. In terms of assembly, a double ring-shaped homohexamer of HslV is capped on each side by a ring-shaped HslU homohexamer. The assembly of the HslU/HslV complex is dependent on binding of ATP.

It is found in the cytoplasm. In terms of biological role, ATPase subunit of a proteasome-like degradation complex; this subunit has chaperone activity. The binding of ATP and its subsequent hydrolysis by HslU are essential for unfolding of protein substrates subsequently hydrolyzed by HslV. HslU recognizes the N-terminal part of its protein substrates and unfolds these before they are guided to HslV for hydrolysis. This is ATP-dependent protease ATPase subunit HslU from Wigglesworthia glossinidia brevipalpis.